The following is a 201-amino-acid chain: HTH-type transcriptional regulator Hpr (201 aa).

The HTH marR-type domain occupies 13–157 (AMLFSQRIAQ…MMCIIRNIYG (145 aa)). Positions 63-86 (ISEIAKFGVMHVSTAFNFSKKLEE) form a DNA-binding region, H-T-H motif.

In terms of assembly, homodimer.

Its function is as follows. Negative regulator of protease production and sporulation. The polypeptide is HTH-type transcriptional regulator Hpr (Geobacillus sp. (strain WCH70)).